We begin with the raw amino-acid sequence, 238 residues long: Large ribosomal subunit protein uL5c (238 aa).

It belongs to the universal ribosomal protein uL5 family. In terms of assembly, part of the 50S ribosomal subunit; contacts the 5S rRNA.

It is found in the plastid. The protein resides in the chloroplast. Binds 5S rRNA, forms part of the central protuberance of the 50S subunit. The chain is Large ribosomal subunit protein uL5c (rpl5) from Thalassiosira pseudonana (Marine diatom).